The primary structure comprises 637 residues: Biosynthetic arginine decarboxylase (637 aa).

An N6-(pyridoxal phosphate)lysine modification is found at Lys-101. A substrate-binding site is contributed by 286–296 (FDVGGGLAVDY).

This sequence belongs to the Orn/Lys/Arg decarboxylase class-II family. SpeA subfamily. Mg(2+) serves as cofactor. The cofactor is pyridoxal 5'-phosphate.

The catalysed reaction is L-arginine + H(+) = agmatine + CO2. It functions in the pathway amine and polyamine biosynthesis; agmatine biosynthesis; agmatine from L-arginine: step 1/1. In terms of biological role, catalyzes the biosynthesis of agmatine from arginine. This Shewanella sp. (strain ANA-3) protein is Biosynthetic arginine decarboxylase.